Here is a 137-residue protein sequence, read N- to C-terminus: Ribosomal RNA large subunit methyltransferase H (137 aa).

S-adenosyl-L-methionine contacts are provided by residues Leu-56, Gly-85, and 104 to 109; that span reads LSPLTL.

Belongs to the RNA methyltransferase RlmH family. Homodimer.

The protein localises to the cytoplasm. The catalysed reaction is pseudouridine(1915) in 23S rRNA + S-adenosyl-L-methionine = N(3)-methylpseudouridine(1915) in 23S rRNA + S-adenosyl-L-homocysteine + H(+). Specifically methylates the pseudouridine at position 1915 (m3Psi1915) in 23S rRNA. In Thermus thermophilus (strain ATCC BAA-163 / DSM 7039 / HB27), this protein is Ribosomal RNA large subunit methyltransferase H.